A 594-amino-acid chain; its full sequence is CDPK-related kinase 4 (594 aa).

The interval 1-131 (MGHCYSRNIS…DSGGGERLDK (131 aa)) is disordered. Glycine 2 carries N-myristoyl glycine lipidation. A compositionally biased stretch (polar residues) spans 37–58 (IPQSPVASGTPEVNSYNISPFQ). Over residues 116–131 (VVDHGGDSGGGERLDK) the composition is skewed to basic and acidic residues. In terms of domain architecture, Protein kinase spans 143–405 (YELGKEVGRG…AAQALAHPWL (263 aa)). Residues 149 to 157 (VGRGHFGHT) and lysine 175 contribute to the ATP site. The active-site Proton acceptor is the aspartate 271. Position 311 is a phosphoserine (serine 311). The segment at 409–439 (NPGLLLDFSVYKLVKSYIRASPFRRSALKAL) is autoinhibitory domain. The interval 428 to 448 (ASPFRRSALKALSKAIPDEEL) is calmodulin binding (CaMBD). EF-hand domains are found at residues 446–481 (EELVFLKAQFMLLDPKDGGLSLNCFTMALTRYATDA), 482–517 (MMESRLPDILNTMQPLAQKKLDFEEFCAAAVSVYQL), 518–557 (EALEEWEQIATSAFEHFEHEGNRIISVQELAGEMSVGPSA), and 558–587 (YPLLKDWIRSSDGKLSFLGYAKFLHGVTVR). Residues aspartate 462, lysine 501, glutamate 506, asparagine 539, glutamate 546, serine 567, aspartate 569, and lysine 571 each coordinate Ca(2+). Serine 573 is subject to Phosphoserine.

It belongs to the protein kinase superfamily. Ser/Thr protein kinase family. CDPK subfamily. As to quaternary structure, binds calmodulin (CaM) in a calcium-dependent manner. Autophosphorylated.

The protein resides in the cell membrane. It carries out the reaction L-seryl-[protein] + ATP = O-phospho-L-seryl-[protein] + ADP + H(+). It catalyses the reaction L-threonyl-[protein] + ATP = O-phospho-L-threonyl-[protein] + ADP + H(+). With respect to regulation, activated by calcium and calmodulin. Autophosphorylation may play an important role in the regulation of the kinase activity. In terms of biological role, may play a role in signal transduction pathways that involve calcium as a second messenger. The sequence is that of CDPK-related kinase 4 (CRK4) from Arabidopsis thaliana (Mouse-ear cress).